We begin with the raw amino-acid sequence, 157 residues long: 6,7-dimethyl-8-ribityllumazine synthase 2 (157 aa).

5-amino-6-(D-ribitylamino)uracil is bound by residues tryptophan 21, 55–57 (AYE), and 79–81 (FVV). Residue arginine 87 is the Proton donor of the active site. Residue serine 112 participates in 5-amino-6-(D-ribitylamino)uracil binding. Position 126 (histidine 126) interacts with (2S)-2-hydroxy-3-oxobutyl phosphate.

It belongs to the DMRL synthase family. As to quaternary structure, homodecamer, arranged as a dimer of pentamers.

It catalyses the reaction (2S)-2-hydroxy-3-oxobutyl phosphate + 5-amino-6-(D-ribitylamino)uracil = 6,7-dimethyl-8-(1-D-ribityl)lumazine + phosphate + 2 H2O + H(+). It functions in the pathway cofactor biosynthesis; riboflavin biosynthesis; riboflavin from 2-hydroxy-3-oxobutyl phosphate and 5-amino-6-(D-ribitylamino)uracil: step 1/2. In terms of biological role, catalyzes the formation of 6,7-dimethyl-8-ribityllumazine by condensation of 5-amino-6-(D-ribitylamino)uracil with 3,4-dihydroxy-2-butanone 4-phosphate. This is the penultimate step in the biosynthesis of riboflavin. This chain is 6,7-dimethyl-8-ribityllumazine synthase 2 (ribH2), found in Mesorhizobium japonicum (strain LMG 29417 / CECT 9101 / MAFF 303099) (Mesorhizobium loti (strain MAFF 303099)).